The following is a 383-amino-acid chain: MAGIPGLLFLLFFLLCAVGQVSPYSAPWKPTWPAYRLPVVLPQSTLNLAKPDFGAEAKLEVSSSCGPQCHKGTPLPTYEEAKQYLSYETLYANGSRTETQVGIYILSSSGDGAQHRDSGSSGKSRRKRQIYGYDSRFSIFGKDFLLNYPFSTSVKLSTGCTGTLVAEKHVLTAAHCIHDGKTYVKGTQKLRVGFLKPKFKDGGRGANDSTSAMPEQMKFQWIRVKRTHVPKGWIKGNANDIGMDYDYALLELKKPHKRKFMKIGVSPPAKQLPGGRIHFSGYDNDRPGNLVYRFCDVKDETYDLLYQQCDAQPGASGSGVYVRMWKRQQQKWERKIIGIFSGHQWVDMNGSPQDFNVAVRITPLKYAQICYWIKGNYLDCREG.

An N-terminal signal peptide occupies residues 1 to 19; sequence MAGIPGLLFLLFFLLCAVG. A glycan (N-linked (GlcNAc...) asparagine) is linked at Asn-93. Ser-109 is subject to Phosphoserine; by FAM20C. Cys-160 and Cys-176 are oxidised to a cystine. The Charge relay system role is filled by His-175. Asn-207 carries an N-linked (GlcNAc...) asparagine glycan. Catalysis depends on charge relay system residues Asp-240 and Ser-316.

The protein belongs to the peptidase S1 family.

It localises to the secreted. This chain is Serine protease 23 (PRSS23), found in Homo sapiens (Human).